Here is a 156-residue protein sequence, read N- to C-terminus: Small ribosomal subunit protein uS7 (156 aa).

Belongs to the universal ribosomal protein uS7 family. As to quaternary structure, part of the 30S ribosomal subunit. Contacts proteins S9 and S11.

In terms of biological role, one of the primary rRNA binding proteins, it binds directly to 16S rRNA where it nucleates assembly of the head domain of the 30S subunit. Is located at the subunit interface close to the decoding center, probably blocks exit of the E-site tRNA. The sequence is that of Small ribosomal subunit protein uS7 from Onion yellows phytoplasma (strain OY-M).